A 109-amino-acid chain; its full sequence is Flagellar hook-basal body complex protein FliE (109 aa).

The protein belongs to the FliE family.

The protein localises to the bacterial flagellum basal body. This is Flagellar hook-basal body complex protein FliE from Pseudomonas fluorescens (strain SBW25).